The sequence spans 260 residues: Uroplakin-1b (260 aa).

Over 1 to 12 the chain is Cytoplasmic; that stretch reads MAKDDSSVRCFQ. A helical membrane pass occupies residues 13 to 38; it reads GLLIFGNVIVGMCGIALTAECIFFVS. The Extracellular portion of the chain corresponds to 39-60; that stretch reads DQHSLYPLLEATDNDDIYGAAW. A helical membrane pass occupies residues 61–81; sequence IGMFVGICLFCLSVLGIVGIM. At 82–86 the chain is on the cytoplasmic side; sequence KSNRK. The helical transmembrane segment at 87–107 threads the bilayer; sequence ILLAYFILMFIVYGFEVASCI. Topologically, residues 108–229 are extracellular; it reads TAATQRDFFT…ELISGPMNRH (122 aa). Residues 230-250 form a helical membrane-spanning segment; that stretch reads AWGVAWFGFAILCWTFWVLLG. Residues 251-260 lie on the Cytoplasmic side of the membrane; that stretch reads TMFYWSRIEY.

It belongs to the tetraspanin (TM4SF) family. Heterodimer with uroplakin-3A (UPK3A) or uroplakin-3B (UPK3B).

Its subcellular location is the membrane. Component of the asymmetric unit membrane (AUM); a highly specialized biomembrane elaborated by terminally differentiated urothelial cells. The polypeptide is Uroplakin-1b (UPK1B) (Neovison vison (American mink)).